Consider the following 280-residue polypeptide: 4-diphosphocytidyl-2-C-methyl-D-erythritol kinase (280 aa).

Residue lysine 8 is part of the active site. 91-101 (PVAAGLAGGST) contributes to the ATP binding site. The active site involves aspartate 133.

Belongs to the GHMP kinase family. IspE subfamily.

The enzyme catalyses 4-CDP-2-C-methyl-D-erythritol + ATP = 4-CDP-2-C-methyl-D-erythritol 2-phosphate + ADP + H(+). Its pathway is isoprenoid biosynthesis; isopentenyl diphosphate biosynthesis via DXP pathway; isopentenyl diphosphate from 1-deoxy-D-xylulose 5-phosphate: step 3/6. Functionally, catalyzes the phosphorylation of the position 2 hydroxy group of 4-diphosphocytidyl-2C-methyl-D-erythritol. In Clostridium botulinum (strain Okra / Type B1), this protein is 4-diphosphocytidyl-2-C-methyl-D-erythritol kinase.